Reading from the N-terminus, the 1066-residue chain is Pumilio homolog 2 (1066 aa).

The interaction with SNAPIN stretch occupies residues 1–260 (MNHDFQALAL…TVGLFDYNSQ (260 aa)). Ser67, Ser70, Ser82, and Ser102 each carry phosphoserine. Disordered regions lie at residues 106-203 (KLDS…GPLP), 368-408 (TANQ…AESL), and 490-551 (TGST…SASL). Residues 119–133 (RDAETDGPEKGDQKG) show a composition bias toward basic and acidic residues. Residues Ser136, Ser177, and Ser181 each carry the phosphoserine modification. At Thr183 the chain carries Phosphothreonine. The segment covering 368 to 383 (TANQQAASQAQPGQQQ) has biased composition (low complexity). The span at 394–406 (ITPSQGQQGQQAE) shows a compositional bias: polar residues. Position 395 is a phosphothreonine (Thr395). The span at 503–514 (QPPQQQQQQQQP) shows a compositional bias: low complexity. The span at 515–525 (STNLQSNSFYG) shows a compositional bias: polar residues. Residues 526 to 540 (SSSLTNSSQSSSLFS) are compositionally biased toward low complexity. A phosphoserine mark is found at Ser587 and Ser592. A disordered region spans residues 620-650 (SPIGMPLPSQTPGHSLTPPPSLSSHGSSSSL). Residues 630-650 (TPGHSLTPPPSLSSHGSSSSL) are compositionally biased toward low complexity. Arg674 carries the post-translational modification Omega-N-methylarginine. Phosphoserine is present on residues Ser684 and Ser700. The region spanning 706–1048 (GRSRLLEDFR…HILAKLEKYY (343 aa)) is the PUM-HD domain. Pumilio repeat units follow at residues 726–761 (DLIGHIVEFSQDQHGSRFIQQKLERATPAERQIVFN), 762–797 (EILQAAYQLMTDVFGNYVIQKFFEFGSLDQKLALAT), 798–835 (RIRGHVLPLALQMYGCRVIQKALESISSDQQVISEMVK), 836–871 (ELDGHVLKCVKDQNGNHVVQKCIECVQPQSLQFIID), 872–907 (AFKGQVFVLSTHPYGCRVIQRILEHCTAEQTLPILE), 908–943 (ELHQHTEQLVQDQYGNYVIQHVLEHGRPEDKSKIVS), 944–979 (EIRGKVLALSQHKFASNVVEKCVTHASRAERALLID), and 980–1022 (EVCC…IIMH). An adenine-nucleotide binding in RNA target region spans residues 741-745 (SRFIQ). Residues 777–781 (NYVIQ) form a uracil-nucleotide binding in RNA target region. The interval 813–817 (CRVIQ) is adenine-nucleotide binding in RNA target. The interval 851-855 (NHVVQ) is non-specific-nucleotide binding in RNA target. The tract at residues 887–891 (CRVIQ) is adenine-nucleotide binding in RNA target. The segment at 923–927 (NYVIQ) is uracil-nucleotide binding in RNA target. A guanine-nucleotide binding in RNA target region spans residues 959-963 (SNVVE). The segment at 1002–1006 (NYVVQ) is uracil-nucleotide binding in RNA target.

As to quaternary structure, homodimer; homodimerizes in vitro. Interacts with DAZ1, DAZL and NANOS1 via its pumilio repeats. Interacts with NANOS3. Interacts with SNAPIN. Recruits the CCR4-POP2-NOT deadenylase leading to translational inhibition and mRNA degradation. Interacts with DDX20. In case of viral infection, interacts with DHX58. Widely expressed. Expressed in embryonic stem cells, heart, kidney, lung, skin, intestine, spleen and thymus. Expressed at intermediate level in brain and liver. Weakly or not expressed in muscles and stomach. Expressed at various stages of myeloid and lymphoid cell development. In the testis expressed in the spermatogoni, spermatocytes, spermatids and Sertoli cells.

It localises to the cytoplasm. The protein resides in the cytoplasmic granule. Its subcellular location is the perinuclear region. Functionally, sequence-specific RNA-binding protein that acts as a post-transcriptional repressor by binding the 3'-UTR of mRNA targets. Binds to an RNA consensus sequence, the Pumilio Response Element (PRE), 5'-UGUANAUA-3', that is related to the Nanos Response Element (NRE). Mediates post-transcriptional repression of transcripts via different mechanisms: acts via direct recruitment of the CCR4-POP2-NOT deadenylase leading to translational inhibition and mRNA degradation. Also mediates deadenylation-independent repression by promoting accessibility of miRNAs. Acts as a post-transcriptional repressor of E2F3 mRNAs by binding to its 3'-UTR and facilitating miRNA regulation. Plays a role in cytoplasmic sensing of viral infection. Represses a program of genes necessary to maintain genomic stability such as key mitotic, DNA repair and DNA replication factors. Its ability to repress those target mRNAs is regulated by the lncRNA NORAD (non-coding RNA activated by DNA damage) which, due to its high abundance and multitude of PUMILIO binding sites, is able to sequester a significant fraction of PUM1 and PUM2 in the cytoplasm. May regulate DCUN1D3 mRNA levels. May support proliferation and self-renewal of stem cells. Binds specifically to miRNA MIR199A precursor, with PUM1, regulates miRNA MIR199A expression at a postranscriptional level. This chain is Pumilio homolog 2 (Pum2), found in Mus musculus (Mouse).